Reading from the N-terminus, the 932-residue chain is Beta-mannosidase A (932 aa).

Residues 1-21 (MRIREQTILALLSPGLPPVTG) form the signal peptide. N-linked (GlcNAc...) asparagine glycosylation is found at Asn40, Asn248, Asn283, Asn317, and Asn348. The Proton donor role is filled by Glu480. 7 N-linked (GlcNAc...) asparagine glycosylation sites follow: Asn538, Asn609, Asn632, Asn659, Asn739, Asn762, and Asn791.

This sequence belongs to the glycosyl hydrolase 2 family. Beta-mannosidase A subfamily. Homodimer.

The protein localises to the secreted. The enzyme catalyses Hydrolysis of terminal, non-reducing beta-D-mannose residues in beta-D-mannosides.. Its pathway is glycan metabolism; N-glycan degradation. Its function is as follows. Exoglycosidase that cleaves the single beta-linked mannose residue from the non-reducing end of beta-mannosidic oligosaccharides of various complexity and length. Involved in the degradation of polymeric mannan and galactomannan. In Aspergillus clavatus (strain ATCC 1007 / CBS 513.65 / DSM 816 / NCTC 3887 / NRRL 1 / QM 1276 / 107), this protein is Beta-mannosidase A (mndA).